The primary structure comprises 333 residues: uncharacterized protein (333 aa).

Residues 234–333 (PPLAPTSAPA…GLSSEFDSDD (100 aa)) form a disordered region. Residues 251 to 265 (VPPPVPAPPTPPPQE) are compositionally biased toward pro residues. Residues 324–333 (GLSSEFDSDD) are compositionally biased toward polar residues.

Its subcellular location is the cell projection. It is found in the cilium. The protein resides in the flagellum. This is an uncharacterized protein from Homo sapiens (Human).